We begin with the raw amino-acid sequence, 298 residues long: Tryptophan 2,3-dioxygenase (298 aa).

Residues 51-55 (FIIQH), tyrosine 113, and arginine 117 contribute to the substrate site. Histidine 240 provides a ligand contact to heme. Threonine 254 lines the substrate pocket.

It belongs to the tryptophan 2,3-dioxygenase family. Homotetramer. Heme serves as cofactor.

The enzyme catalyses L-tryptophan + O2 = N-formyl-L-kynurenine. It functions in the pathway amino-acid degradation; L-tryptophan degradation via kynurenine pathway; L-kynurenine from L-tryptophan: step 1/2. Heme-dependent dioxygenase that catalyzes the oxidative cleavage of the L-tryptophan (L-Trp) pyrrole ring and converts L-tryptophan to N-formyl-L-kynurenine. Catalyzes the oxidative cleavage of the indole moiety. The sequence is that of Tryptophan 2,3-dioxygenase from Xanthomonas campestris pv. campestris (strain 8004).